We begin with the raw amino-acid sequence, 108 residues long: Large ribosomal subunit protein uL24 (108 aa).

The tract at residues 46–65 (RHTRVQQSSRGSQSGGIVTQ) is disordered. Residues 51–61 (QQSSRGSQSGG) show a composition bias toward low complexity.

The protein belongs to the universal ribosomal protein uL24 family. Part of the 50S ribosomal subunit.

Functionally, one of two assembly initiator proteins, it binds directly to the 5'-end of the 23S rRNA, where it nucleates assembly of the 50S subunit. In terms of biological role, one of the proteins that surrounds the polypeptide exit tunnel on the outside of the subunit. The polypeptide is Large ribosomal subunit protein uL24 (Parafrankia sp. (strain EAN1pec)).